We begin with the raw amino-acid sequence, 180 residues long: uncharacterized protein (180 aa).

One can recognise a Nudix hydrolase domain in the interval 35–163 (LRHRATYIVV…TPDSLKALAL (129 aa)). A Nudix box motif is present at residues 72 to 94 (GGVVQADEQLLESARREAEEELG). The Mg(2+) site is built by Glu88 and Glu92.

It belongs to the Nudix hydrolase family. The cofactor is Mg(2+).

This is an uncharacterized protein from Shigella flexneri.